We begin with the raw amino-acid sequence, 67 residues long: MPKLKTKSGAKKRFKITGTGKVMYAQAGKRHGMIKRTNKQIRNLRGTTTLFEGDAANVKKYFLPNQR.

Belongs to the bacterial ribosomal protein bL35 family.

The chain is Large ribosomal subunit protein bL35 from Methylorubrum extorquens (strain CM4 / NCIMB 13688) (Methylobacterium extorquens).